A 472-amino-acid chain; its full sequence is Probable sterol O-acyltransferase 2 (472 aa).

Phosphoserine is present on Ser12. 3 consecutive transmembrane segments (helical) span residues 61 to 81 (FTGF…MSFL), 111 to 131 (LAMS…ALGY), and 135 to 155 (YGLG…HCVL). N-linked (GlcNAc...) asparagine glycosylation occurs at Asn161. A helical transmembrane segment spans residues 170 to 190 (FILHSMVILMKLHSYNVVNGW). N-linked (GlcNAc...) asparagine glycosylation is present at Asn233. A run of 2 helical transmembrane segments spans residues 262-282 (IHYL…LVII) and 317-337 (TVAF…WVIF). Asn342 carries an N-linked (GlcNAc...) asparagine glycan. Positions 355–361 (FYDDWWN) match the FYXDWWN motif motif. The active site involves His409. The helical transmembrane segment at 452 to 472 (IAFWFSIIIGIALIAALYILF) threads the bilayer.

Belongs to the membrane-bound acyltransferase family. Sterol o-acyltransferase subfamily.

Its subcellular location is the endoplasmic reticulum membrane. Sterol O-acyltransferase that catalyzes the formation of stery esters. This Schizosaccharomyces pombe (strain 972 / ATCC 24843) (Fission yeast) protein is Probable sterol O-acyltransferase 2 (are2).